The primary structure comprises 640 residues: Antigenic protein NP1 (640 aa).

Positions 1–288 (VQVSIGKCNH…SYVNIAHAFG (288 aa)) constitute a Peptidase M60 domain. In terms of domain architecture, PA14 spans 463-615 (LDPHQVEYEV…TDQSSVNVSK (153 aa)).

The polypeptide is Antigenic protein NP1 (Entamoeba histolytica).